The following is a 185-amino-acid chain: Elongation factor P (185 aa).

It belongs to the elongation factor P family.

The protein localises to the cytoplasm. The protein operates within protein biosynthesis; polypeptide chain elongation. Involved in peptide bond synthesis. Stimulates efficient translation and peptide-bond synthesis on native or reconstituted 70S ribosomes in vitro. Probably functions indirectly by altering the affinity of the ribosome for aminoacyl-tRNA, thus increasing their reactivity as acceptors for peptidyl transferase. This Bacillus mycoides (strain KBAB4) (Bacillus weihenstephanensis) protein is Elongation factor P.